The chain runs to 169 residues: Nucleoside diphosphate kinase 3 (169 aa).

ADP-binding residues include K29, R105, T111, R122, V129, and N132. H135 acts as the Pros-phosphohistidine intermediate in catalysis.

This sequence belongs to the NDK family. In terms of assembly, homohexamer. Interacts (via its N-terminal region) with KAT5; this interaction enables recruitment of NME3 at DNA damage sites where it plays a role in the repair of DNA. Found in association with several ciliary nephronophthisis proteins, including NEK8, CEP164, ANKS6. Mg(2+) serves as cofactor.

It localises to the mitochondrion outer membrane. The protein resides in the cytoplasm. Its subcellular location is the cytoskeleton. It is found in the cilium basal body. The catalysed reaction is a 2'-deoxyribonucleoside 5'-diphosphate + ATP = a 2'-deoxyribonucleoside 5'-triphosphate + ADP. It carries out the reaction a ribonucleoside 5'-diphosphate + ATP = a ribonucleoside 5'-triphosphate + ADP. Functionally, catalyzes the phosphorylation of ribonucleosides and deoxyribonucleoside diphosphates, other than ATP, into the corresponding triphosphates with ATP as the major phosphate donor. The ATP gamma phosphate is transferred to the nucleoside diphosphate beta phosphate via a ping-pong mechanism, using a phosphorylated active-site intermediate. Through the catalyzed exchange of gamma-phosphate between di- and triphosphonucleosides participates in regulation of intracellular nucleotide homeostasis. Inhibits granulocyte differentiation. May be required for ciliary function during renal development. Its function is as follows. Independently of its kinase activity, facilitates mitochondrial tethering prior to membrane fusion through its direct membrane-binding and hexamerization. Implicated in repair of both single- and double-stranded breaks in DNA through its association with the ribonucleotide reductase complex (RNR complex) via its interaction with the histone acetyltransferase KAT5, this interaction enables recruitment of NME3 at DNA damage sites where it plays a role in the repair of DNA, independently of its kinase activity. The chain is Nucleoside diphosphate kinase 3 (Nme3) from Mus musculus (Mouse).